Reading from the N-terminus, the 167-residue chain is Translationally-controlled tumor protein homolog (167 aa).

Residues 1–167 enclose the TCTP domain; it reads MIIYTDIISG…WKHGVKAEKI (167 aa).

Belongs to the TCTP family.

The protein localises to the cytoplasm. It localises to the cytoskeleton. Involved in protein synthesis. Involved in microtubule stabilization. The polypeptide is Translationally-controlled tumor protein homolog (Kluyveromyces lactis (strain ATCC 8585 / CBS 2359 / DSM 70799 / NBRC 1267 / NRRL Y-1140 / WM37) (Yeast)).